The chain runs to 177 residues: Transcriptional repressor NrdR (177 aa).

The segment at 3-34 (CPYCGGSETQVKDSRPSEDGAAIRRRRVCPDC) is a zinc-finger region. In terms of domain architecture, ATP-cone spans 49-139 (VVVLKRSGKR…VYKNFREARD (91 aa)). The interval 148–177 (SDGMPVPAAAPEAEGDPEPEASGRRRAGRP) is disordered.

Belongs to the NrdR family. The cofactor is Zn(2+).

Functionally, negatively regulates transcription of bacterial ribonucleotide reductase nrd genes and operons by binding to NrdR-boxes. This Methylobacterium radiotolerans (strain ATCC 27329 / DSM 1819 / JCM 2831 / NBRC 15690 / NCIMB 10815 / 0-1) protein is Transcriptional repressor NrdR.